A 291-amino-acid chain; its full sequence is Ribosomal RNA small subunit methyltransferase H (291 aa).

S-adenosyl-L-methionine contacts are provided by residues 31 to 33 (GGY), aspartate 49, phenylalanine 76, aspartate 97, and glutamine 104.

Belongs to the methyltransferase superfamily. RsmH family.

It is found in the cytoplasm. It catalyses the reaction cytidine(1402) in 16S rRNA + S-adenosyl-L-methionine = N(4)-methylcytidine(1402) in 16S rRNA + S-adenosyl-L-homocysteine + H(+). Functionally, specifically methylates the N4 position of cytidine in position 1402 (C1402) of 16S rRNA. The sequence is that of Ribosomal RNA small subunit methyltransferase H from Anaplasma marginale (strain Florida).